The primary structure comprises 536 residues: Carboxypeptidase Y homolog A (536 aa).

Residues 1–17 (MKFFTTGLLATAALAAA) form the signal peptide. Residues 18-124 (QEQQVLQAED…KLHNYDLRVK (107 aa)) constitute a propeptide that is removed on maturation. Cystine bridges form between C172–C412, C306–C320, C330–C353, C337–C346, and C375–C382. N-linked (GlcNAc...) asparagine glycosylation occurs at N203. S259 is an active-site residue. D451 is an active-site residue. N-linked (GlcNAc...) asparagine glycosylation occurs at N502. The active site involves H513.

This sequence belongs to the peptidase S10 family.

The protein resides in the vacuole. The catalysed reaction is Release of a C-terminal amino acid with broad specificity.. Vacuolar carboxypeptidase involved in degradation of small peptides. Digests preferentially peptides containing an aliphatic or hydrophobic residue in P1' position, as well as methionine, leucine or phenylalanine in P1 position of ester substrate. The chain is Carboxypeptidase Y homolog A (cpyA) from Trichophyton rubrum (Athlete's foot fungus).